Reading from the N-terminus, the 20-residue chain is SRLPPATRDKLADEITFFPA.

Monomer.

The enzyme catalyses 2 a Fe(II)-siderophore + NAD(+) + H(+) = 2 a Fe(III)-siderophore + NADH. Functionally, reductase activity that acts on Fe(3+)-chelates and NADH as an electron donor and requires the presence of FMN for full activity. May play a role in iron uptake. This is Ferric reductase A (ferA) from Paracoccus denitrificans.